Reading from the N-terminus, the 65-residue chain is Large ribosomal subunit protein bL35 (65 aa).

Positions 1-46 (MPKMKTRQSAAKRYEVTGSGKLRRRRAGKNHLLQHKSAARKRSLST) are disordered. The span at 21-44 (KLRRRRAGKNHLLQHKSAARKRSL) shows a compositional bias: basic residues.

This sequence belongs to the bacterial ribosomal protein bL35 family.

In Gloeobacter violaceus (strain ATCC 29082 / PCC 7421), this protein is Large ribosomal subunit protein bL35.